We begin with the raw amino-acid sequence, 54 residues long: UPF0391 membrane protein BAB1_1670 (54 aa).

The next 2 membrane-spanning stretches (helical) occupy residues 5-25 (VLVF…GIAG) and 29-48 (GIAQ…SLIA).

This sequence belongs to the UPF0391 family.

The protein resides in the cell membrane. In Brucella abortus (strain 2308), this protein is UPF0391 membrane protein BAB1_1670.